Consider the following 502-residue polypeptide: Type-2 serine--tRNA ligase (502 aa).

L-serine is bound at residue alanine 304. Cysteine 306 lines the Zn(2+) pocket. Arginine 336 lines the L-serine pocket. ATP contacts are provided by residues 336–338 (RYE) and 347–348 (RV). L-serine-binding positions include 353 to 355 (RVE) and glutamine 400. Glutamate 355 contributes to the Zn(2+) binding site. Glutamate 432 lines the ATP pocket. Asparagine 435 contributes to the L-serine binding site. Residue cysteine 461 participates in Zn(2+) binding. Arginine 468 is an ATP binding site.

It belongs to the class-II aminoacyl-tRNA synthetase family. Type-2 seryl-tRNA synthetase subfamily. In terms of assembly, homodimer. Requires Zn(2+) as cofactor.

It is found in the cytoplasm. It carries out the reaction tRNA(Ser) + L-serine + ATP = L-seryl-tRNA(Ser) + AMP + diphosphate + H(+). The catalysed reaction is tRNA(Sec) + L-serine + ATP = L-seryl-tRNA(Sec) + AMP + diphosphate + H(+). The protein operates within aminoacyl-tRNA biosynthesis; selenocysteinyl-tRNA(Sec) biosynthesis; L-seryl-tRNA(Sec) from L-serine and tRNA(Sec): step 1/1. Functionally, catalyzes the attachment of serine to tRNA(Ser). Is also able to aminoacylate tRNA(Sec) with serine, to form the misacylated tRNA L-seryl-tRNA(Sec), which will be further converted into selenocysteinyl-tRNA(Sec). This chain is Type-2 serine--tRNA ligase, found in Methanococcoides burtonii (strain DSM 6242 / NBRC 107633 / OCM 468 / ACE-M).